The sequence spans 219 residues: MTATKATSDQPLFGRPWIFIRGVPSMKFLPPEGPLEIAFAGRSNVGKSSLINALVGQKGLARTSNTPGRTQELNYFVPEGYSGEGDDLPPMALVDMPGYGYAKAPKDHVDAWTKLVFDYLRGRATLKRVYLLIDSRHGIKANDEDVLTLLDKAAMSYQIVLTKTDKIKEAGVPRLIEETLEKIRKRPAAYPFVLSTSSEKDKGLKELRAAICETVGHFG.

The EngB-type G domain maps to 33–217 (GPLEIAFAGR…RAAICETVGH (185 aa)). Residues 41–48 (GRSNVGKS), 68–72 (GRTQE), 95–98 (DMPG), 162–165 (TKTD), and 196–198 (TSS) each bind GTP. Positions 48 and 70 each coordinate Mg(2+).

It belongs to the TRAFAC class TrmE-Era-EngA-EngB-Septin-like GTPase superfamily. EngB GTPase family. It depends on Mg(2+) as a cofactor.

In terms of biological role, necessary for normal cell division and for the maintenance of normal septation. The sequence is that of Probable GTP-binding protein EngB from Allorhizobium ampelinum (strain ATCC BAA-846 / DSM 112012 / S4) (Agrobacterium vitis (strain S4)).